The chain runs to 591 residues: Splicing factor U2af large subunit A (591 aa).

The segment at 1–215 (MAEHDAPPES…QSKRMSGFDQ (215 aa)) is disordered. The span at 27 to 36 (SPQQDAQPLS) shows a compositional bias: polar residues. 2 stretches are compositionally biased toward basic and acidic residues: residues 37–79 (SRDR…SRDR) and 157–191 (RERSERREHRDRSDDRDYRRSCDRDAERRDRDRDG). 2 consecutive RRM domains span residues 272-355 (RRVY…RPTD) and 392-470 (DRIF…RANQ).

This sequence belongs to the splicing factor SR family.

It localises to the nucleus. Its function is as follows. Necessary for the splicing of pre-mRNA. This is Splicing factor U2af large subunit A (U2AF65A) from Triticum aestivum (Wheat).